The chain runs to 491 residues: Pentatricopeptide repeat-containing protein At5g27460 (491 aa).

10 PPR repeats span residues 69 to 99 (SLSE…MENQ), 105 to 139 (SVYD…SVSM), 142 to 176 (AKSA…GFLV), 177 to 211 (TPHP…KIPR), 212 to 246 (NVLS…KSVE), 248 to 278 (GWSS…AEKM), 283 to 313 (NRLG…SKSV), 318 to 348 (SCVN…WEAQ), 353 to 387 (DVRV…GGTP), and 388 to 426 (NYKT…HWRP).

It belongs to the PPR family. P subfamily.

The protein is Pentatricopeptide repeat-containing protein At5g27460 of Arabidopsis thaliana (Mouse-ear cress).